The primary structure comprises 194 residues: CASP-like protein 4D1 (194 aa).

Over 1–10 (MASRTVLLPS) the chain is Cytoplasmic. Residues 11 to 31 (AVLILRLLSLGLLAASLALIA) form a helical membrane-spanning segment. Over 32 to 55 (ADKLNVDSDPPQRYTFRDVYAYRY) the chain is Extracellular. A helical membrane pass occupies residues 56–76 (VLAVAVIGCAYTLLQLPLAAV). The Cytoplasmic portion of the chain corresponds to 77–94 (SIIASGNNKRGIGAGGGS). The chain crosses the membrane as a helical span at residues 95–115 (VAVALLVLVLLADVVFALLLA). Residues 116 to 161 (TGAAAGFAFTYDVKRYLDGQFDDDSIGTPEVDKLHRDMDKFFDLAY) lie on the Extracellular side of the membrane. A helical transmembrane segment spans residues 162 to 182 (AAAGLMLAAAACMALVIMLSV). Residues 183 to 194 (YSLARQVRSDYI) are Cytoplasmic-facing.

This sequence belongs to the Casparian strip membrane proteins (CASP) family. In terms of assembly, homodimer and heterodimers.

It is found in the cell membrane. This is CASP-like protein 4D1 from Sorghum bicolor (Sorghum).